Reading from the N-terminus, the 339-residue chain is Glycerol-3-phosphate dehydrogenase [NAD(P)+] (339 aa).

4 residues coordinate NADPH: S14, Y15, H35, and K109. Sn-glycerol 3-phosphate is bound by residues K109, G138, and T140. An NADPH-binding site is contributed by A142. 5 residues coordinate sn-glycerol 3-phosphate: K194, D247, S257, R258, and N259. Catalysis depends on K194, which acts as the Proton acceptor. Residue R258 coordinates NADPH. NADPH is bound by residues V282 and E284.

Belongs to the NAD-dependent glycerol-3-phosphate dehydrogenase family.

The protein localises to the cytoplasm. The enzyme catalyses sn-glycerol 3-phosphate + NAD(+) = dihydroxyacetone phosphate + NADH + H(+). The catalysed reaction is sn-glycerol 3-phosphate + NADP(+) = dihydroxyacetone phosphate + NADPH + H(+). Its pathway is membrane lipid metabolism; glycerophospholipid metabolism. Functionally, catalyzes the reduction of the glycolytic intermediate dihydroxyacetone phosphate (DHAP) to sn-glycerol 3-phosphate (G3P), the key precursor for phospholipid synthesis. The polypeptide is Glycerol-3-phosphate dehydrogenase [NAD(P)+] (Shewanella amazonensis (strain ATCC BAA-1098 / SB2B)).